The chain runs to 145 residues: Lipoprotein signal peptidase (145 aa).

Helical transmembrane passes span 1-21 (MVYI…LLVM), 57-77 (YLFI…YYKT), and 79-99 (GSGM…GNLI). Catalysis depends on residues D109 and D123. The helical transmembrane segment at 115 to 135 (IWPVFNLADSSVVIGAALLIL) threads the bilayer.

The protein belongs to the peptidase A8 family.

Its subcellular location is the cell inner membrane. It catalyses the reaction Release of signal peptides from bacterial membrane prolipoproteins. Hydrolyzes -Xaa-Yaa-Zaa-|-(S,diacylglyceryl)Cys-, in which Xaa is hydrophobic (preferably Leu), and Yaa (Ala or Ser) and Zaa (Gly or Ala) have small, neutral side chains.. It participates in protein modification; lipoprotein biosynthesis (signal peptide cleavage). Its function is as follows. This protein specifically catalyzes the removal of signal peptides from prolipoproteins. The chain is Lipoprotein signal peptidase from Halothermothrix orenii (strain H 168 / OCM 544 / DSM 9562).